The primary structure comprises 49 residues: uncharacterized protein (49 aa).

A helical membrane pass occupies residues 5 to 25; it reads LTTIFSVVIVLAIFLYFGLLI.

Belongs to the plectrovirus ORF12 protein family.

The protein localises to the host membrane. This is an uncharacterized protein from Spiroplasma virus SpV1-R8A2 B (SpV1).